A 520-amino-acid chain; its full sequence is Maturase K (520 aa).

It belongs to the intron maturase 2 family. MatK subfamily.

The protein resides in the plastid. The protein localises to the chloroplast. Functionally, usually encoded in the trnK tRNA gene intron. Probably assists in splicing its own and other chloroplast group II introns. The protein is Maturase K of Galanthus elwesii (Giant snowdrop).